A 1885-amino-acid chain; its full sequence is RNA-directed RNA polymerase (1885 aa).

The Alphavirus-like MT domain maps to 63–239 (SPFAYVNHSH…GFLLSSSSIL (177 aa)). Residues 607–635 (QKEKNLGQEASKGKGIEQEERRKSDEAKF) show a composition bias toward basic and acidic residues. The tract at residues 607–639 (QKEKNLGQEASKGKGIEQEERRKSDEAKFDSGP) is disordered. In terms of domain architecture, Fe2OG dioxygenase spans 748-836 (NFNSALIQVY…RTSVTLRVHK (89 aa)). Residues 1027–1192 (MSMIKGKSEE…RLFKDGVNYK (166 aa)) form the (+)RNA virus helicase ATP-binding domain. Residue 1060–1067 (GFAGSGKS) participates in ATP binding. Residues 1193–1337 (WYSYRINKFI…CSGIGASKEF (145 aa)) enclose the (+)RNA virus helicase C-terminal domain. The RdRp catalytic domain occupies 1634 to 1741 (SMCVESDYTA…LRNLREIDTH (108 aa)).

It carries out the reaction RNA(n) + a ribonucleoside 5'-triphosphate = RNA(n+1) + diphosphate. Involved in viral RNA replication. This is RNA-directed RNA polymerase from Crataegus (hawthorn).